Consider the following 229-residue polypeptide: Potassium/proton antiporter CemA (229 aa).

4 consecutive transmembrane segments (helical) span residues 7–27 (FIPF…YLSF), 106–126 (MILH…YSIL), 154–174 (ILLV…ELLI), and 189–209 (IISS…KYWI).

The protein belongs to the CemA family.

It localises to the plastid. The protein localises to the chloroplast inner membrane. It carries out the reaction K(+)(in) + H(+)(out) = K(+)(out) + H(+)(in). Functionally, contributes to K(+)/H(+) antiport activity by supporting proton efflux to control proton extrusion and homeostasis in chloroplasts in a light-dependent manner to modulate photosynthesis. Prevents excessive induction of non-photochemical quenching (NPQ) under continuous-light conditions. Indirectly promotes efficient inorganic carbon uptake into chloroplasts. The polypeptide is Potassium/proton antiporter CemA (Spinacia oleracea (Spinach)).